Reading from the N-terminus, the 421-residue chain is Serine hydroxymethyltransferase (421 aa).

(6S)-5,6,7,8-tetrahydrofolate is bound by residues L121 and 125-127; that span reads GHL. N6-(pyridoxal phosphate)lysine is present on K230. 355 to 357 serves as a coordination point for (6S)-5,6,7,8-tetrahydrofolate; that stretch reads SPF.

The protein belongs to the SHMT family. In terms of assembly, homodimer. The cofactor is pyridoxal 5'-phosphate.

Its subcellular location is the cytoplasm. The catalysed reaction is (6R)-5,10-methylene-5,6,7,8-tetrahydrofolate + glycine + H2O = (6S)-5,6,7,8-tetrahydrofolate + L-serine. Its pathway is one-carbon metabolism; tetrahydrofolate interconversion. The protein operates within amino-acid biosynthesis; glycine biosynthesis; glycine from L-serine: step 1/1. Functionally, catalyzes the reversible interconversion of serine and glycine with tetrahydrofolate (THF) serving as the one-carbon carrier. This reaction serves as the major source of one-carbon groups required for the biosynthesis of purines, thymidylate, methionine, and other important biomolecules. Also exhibits THF-independent aldolase activity toward beta-hydroxyamino acids, producing glycine and aldehydes, via a retro-aldol mechanism. This chain is Serine hydroxymethyltransferase, found in Psychromonas ingrahamii (strain DSM 17664 / CCUG 51855 / 37).